The chain runs to 932 residues: Calpain-like protease palB/cpr-8 (932 aa).

One can recognise a Calpain catalytic domain in the interval 96–419 (KLHGNIFPPW…FDSLYVNWSP (324 aa)). Residues Cys178, His346, and Asn366 contribute to the active site. The tract at residues 890–932 (QGHVTEGSDDDGGGGGGGGGGVHVEISSDGVVSIGEWEVADED) is disordered. Gly residues predominate over residues 902–911 (GGGGGGGGGV).

This sequence belongs to the peptidase C2 family. PalB/RIM13 subfamily.

In terms of biological role, required for the proteolytic cleavage of the transcription factor pacc-1 in response to alkaline ambient pH. This is Calpain-like protease palB/cpr-8 (cpr-8) from Neurospora crassa (strain ATCC 24698 / 74-OR23-1A / CBS 708.71 / DSM 1257 / FGSC 987).